The chain runs to 241 residues: Uridylate kinase (241 aa).

An ATP-binding site is contributed by 12 to 15 (KISG). Positions 20-25 (GEKGTG) are involved in allosteric activation by GTP. A UMP-binding site is contributed by Gly-54. 2 residues coordinate ATP: Gly-55 and Arg-59. UMP-binding positions include Asp-74 and 135–142 (TGNPYFST). Asn-163, Tyr-169, and Asp-172 together coordinate ATP.

The protein belongs to the UMP kinase family. As to quaternary structure, homohexamer.

It is found in the cytoplasm. It carries out the reaction UMP + ATP = UDP + ADP. It functions in the pathway pyrimidine metabolism; CTP biosynthesis via de novo pathway; UDP from UMP (UMPK route): step 1/1. Its activity is regulated as follows. Allosterically activated by GTP. Inhibited by UTP. In terms of biological role, catalyzes the reversible phosphorylation of UMP to UDP. This Lactobacillus delbrueckii subsp. bulgaricus (strain ATCC 11842 / DSM 20081 / BCRC 10696 / JCM 1002 / NBRC 13953 / NCIMB 11778 / NCTC 12712 / WDCM 00102 / Lb 14) protein is Uridylate kinase.